Reading from the N-terminus, the 386-residue chain is Interleukin-13 receptor subunit alpha-2 (386 aa).

Positions 1–21 (MAFIHLDVGFLYTLLVCTAFG) are cleaved as a signal peptide. At 22 to 338 (SMLSNAEIKV…CWKGDIWKET (317 aa)) the chain is on the extracellular side. Fibronectin type-III domains are found at residues 33–133 (PPQD…SPQG), 138–234 (KIQD…LQNI), and 239–338 (PPDY…WKET). Cys64 and Cys112 are disulfide-bonded. Asn114 is a glycosylation site (N-linked (GlcNAc...) asparagine). 2 cysteine pairs are disulfide-bonded: Cys144–Cys154 and Cys183–Cys196. 2 N-linked (GlcNAc...) asparagine glycosylation sites follow: Asn214 and Asn298. A disulfide bridge links Cys268 with Cys315. Positions 321–325 (WSEWS) match the WSXWS motif motif. Residues 339–359 (LVFFLIPFAFVSIFVLVITCL) form a helical membrane-spanning segment. The Cytoplasmic segment spans residues 360 to 386 (LLYKQRALLKTIFHTKKEVFSHQDTFC).

Belongs to the type I cytokine receptor family. Type 5 subfamily. Interacts with IL4RA. Interacts with high affinity to interleukin-13 (IL13), but not to interleukin-4 (IL4). Post-translationally, cleaved by MMP8 leading to a soluble form that is also able to interact with IL13. Expressed in kidney, placenta, liver, skeletal muscle and thymus. Expression was not seen in whole blood and heart.

It is found in the cell membrane. Functionally, cell surface receptor that plays a role in the regulation of IL-13-mediated responses. Functions as a decoy receptor that inhibits IL-13- and IL-4-mediated signal transduction via the JAK-STAT pathway and thereby modulates immune responses and inflammation. Serves as a functional signaling receptor for IL-13 in an alternative pathway involving AP-1 ultimately leading to the production of TGFB1. The chain is Interleukin-13 receptor subunit alpha-2 (IL13RA2) from Canis lupus familiaris (Dog).